Reading from the N-terminus, the 288-residue chain is Glycine--tRNA ligase alpha subunit (288 aa).

It belongs to the class-II aminoacyl-tRNA synthetase family. In terms of assembly, tetramer of two alpha and two beta subunits.

The protein resides in the cytoplasm. The catalysed reaction is tRNA(Gly) + glycine + ATP = glycyl-tRNA(Gly) + AMP + diphosphate. This is Glycine--tRNA ligase alpha subunit from Rickettsia rickettsii (strain Iowa).